A 292-amino-acid chain; its full sequence is Transforming growth factor-beta receptor type 3-like protein (292 aa).

The signal sequence occupies residues 1–16; that stretch reads MLGTVLLLALLPGITT. In terms of domain architecture, ZP; truncated spans 17–170; that stretch reads LPSGPPAPPF…APAPLTPPPP (154 aa). Residues 17–244 lie on the Extracellular side of the membrane; sequence LPSGPPAPPF…PAPAALEPAP (228 aa). Cysteines 85 and 147 form a disulfide. The interval 160–236 is disordered; sequence RAPAPLTPPP…AVRPEPPAPA (77 aa). 2 stretches are compositionally biased toward pro residues: residues 164 to 175 and 213 to 222; these read PLTPPPPPPPSR and PRPPPRPPKS. A helical membrane pass occupies residues 245-265; that stretch reads VVALVLAAFVLGAALAAGLGL. The Cytoplasmic portion of the chain corresponds to 266–292; sequence VCAHSAPHAPGPPARASPSGPQPRRSQ. Positions 273 to 292 are disordered; the sequence is HAPGPPARASPSGPQPRRSQ. The span at 281–292 shows a compositional bias: low complexity; the sequence is ASPSGPQPRRSQ.

Post-translationally, glycosylated. In terms of tissue distribution, expressed in pituitary gland gonadotrope cells.

Its subcellular location is the cell membrane. Its function is as follows. Expressed in gonadotrope cells, acts as an inhibin B coreceptor and regulates follicle-stimulating hormone (FSH) levels and female fertility. The chain is Transforming growth factor-beta receptor type 3-like protein from Homo sapiens (Human).